The chain runs to 93 residues: Integration host factor subunit beta (93 aa).

This sequence belongs to the bacterial histone-like protein family. Heterodimer of an alpha and a beta chain.

Functionally, this protein is one of the two subunits of integration host factor, a specific DNA-binding protein that functions in genetic recombination as well as in transcriptional and translational control. The chain is Integration host factor subunit beta from Glaesserella parasuis serovar 5 (strain SH0165) (Haemophilus parasuis).